Reading from the N-terminus, the 217-residue chain is Pyridoxine/pyridoxamine 5'-phosphate oxidase (217 aa).

Residues 13-16 (RREY) and Lys-71 contribute to the substrate site. Residues 66–71 (RIVLLK), 81–82 (YT), Arg-87, Lys-88, and Gln-110 contribute to the FMN site. Substrate is bound by residues Tyr-128, Arg-132, and Ser-136. Residues 145–146 (QS) and Trp-190 each bind FMN. Position 196 to 198 (196 to 198 (RLH)) interacts with substrate. Arg-200 serves as a coordination point for FMN.

This sequence belongs to the pyridoxamine 5'-phosphate oxidase family. As to quaternary structure, homodimer. It depends on FMN as a cofactor.

The catalysed reaction is pyridoxamine 5'-phosphate + O2 + H2O = pyridoxal 5'-phosphate + H2O2 + NH4(+). It catalyses the reaction pyridoxine 5'-phosphate + O2 = pyridoxal 5'-phosphate + H2O2. The protein operates within cofactor metabolism; pyridoxal 5'-phosphate salvage; pyridoxal 5'-phosphate from pyridoxamine 5'-phosphate: step 1/1. Its pathway is cofactor metabolism; pyridoxal 5'-phosphate salvage; pyridoxal 5'-phosphate from pyridoxine 5'-phosphate: step 1/1. Its function is as follows. Catalyzes the oxidation of either pyridoxine 5'-phosphate (PNP) or pyridoxamine 5'-phosphate (PMP) into pyridoxal 5'-phosphate (PLP). The polypeptide is Pyridoxine/pyridoxamine 5'-phosphate oxidase (Serratia proteamaculans (strain 568)).